A 161-amino-acid chain; its full sequence is Low molecular weight phosphotyrosine protein phosphatase (161 aa).

The Nucleophile role is filled by C14. R20 functions as the Transition state stabilizer in the catalytic mechanism. S57 is modified (phosphoserine). D133 (proton donor) is an active-site residue.

The protein belongs to the low molecular weight phosphotyrosine protein phosphatase family.

The protein localises to the cytoplasm. The enzyme catalyses O-phospho-L-tyrosyl-[protein] + H2O = L-tyrosyl-[protein] + phosphate. The catalysed reaction is a phosphate monoester + H2O = an alcohol + phosphate. Functionally, acts on tyrosine phosphorylated proteins, low-MW aryl phosphates and natural and synthetic acyl phosphates. The protein is Low molecular weight phosphotyrosine protein phosphatase of Saccharomyces cerevisiae (strain ATCC 204508 / S288c) (Baker's yeast).